Here is a 643-residue protein sequence, read N- to C-terminus: 1-deoxy-D-xylulose-5-phosphate synthase (643 aa).

Thiamine diphosphate-binding positions include histidine 78 and 119–121; that span reads AHS. Aspartate 150 contacts Mg(2+). Thiamine diphosphate contacts are provided by residues 151-152, asparagine 179, tyrosine 288, and glutamate 370; that span reads GS. Asparagine 179 is a binding site for Mg(2+).

It belongs to the transketolase family. DXPS subfamily. Homodimer. Requires Mg(2+) as cofactor. Thiamine diphosphate is required as a cofactor.

The enzyme catalyses D-glyceraldehyde 3-phosphate + pyruvate + H(+) = 1-deoxy-D-xylulose 5-phosphate + CO2. The protein operates within metabolic intermediate biosynthesis; 1-deoxy-D-xylulose 5-phosphate biosynthesis; 1-deoxy-D-xylulose 5-phosphate from D-glyceraldehyde 3-phosphate and pyruvate: step 1/1. Functionally, catalyzes the acyloin condensation reaction between C atoms 2 and 3 of pyruvate and glyceraldehyde 3-phosphate to yield 1-deoxy-D-xylulose-5-phosphate (DXP). In Brucella ovis (strain ATCC 25840 / 63/290 / NCTC 10512), this protein is 1-deoxy-D-xylulose-5-phosphate synthase.